Reading from the N-terminus, the 536-residue chain is Phosphoenolpyruvate carboxykinase (ATP) (536 aa).

Substrate-binding residues include R61, Y195, and K201. ATP is bound by residues K201, H220, and 236-244 (GLSGTGKTT). The Mn(2+) site is built by K201 and H220. D257 is a Mn(2+) binding site. ATP-binding residues include E285, R322, and T447. R322 contacts substrate.

This sequence belongs to the phosphoenolpyruvate carboxykinase (ATP) family. The cofactor is Mn(2+).

Its subcellular location is the cytoplasm. The catalysed reaction is oxaloacetate + ATP = phosphoenolpyruvate + ADP + CO2. Its pathway is carbohydrate biosynthesis; gluconeogenesis. Involved in the gluconeogenesis. Catalyzes the conversion of oxaloacetate (OAA) to phosphoenolpyruvate (PEP) through direct phosphoryl transfer between the nucleoside triphosphate and OAA. This Rhizobium meliloti (strain 1021) (Ensifer meliloti) protein is Phosphoenolpyruvate carboxykinase (ATP).